Here is a 1451-residue protein sequence, read N- to C-terminus: Fanconi anemia group D2 protein (1451 aa).

The disordered stretch occupies residues 1–37 (MVSKRRLSKSEDKESLTEDASKTRKQPLSKKTKKSHI). The tract at residues 1–291 (MVSKRRLSKS…IKFILHSVTA (291 aa)) is interaction with FANCE. At serine 8 the chain carries Phosphoserine. The segment covering 8 to 22 (SKSEDKESLTEDASK) has biased composition (basic and acidic residues). Over residues 23-36 (TRKQPLSKKTKKSH) the composition is skewed to basic residues. Serine 222 carries the post-translational modification Phosphoserine; by ATM. Positions 248–359 (VLSSLRLDPN…IKSAIRYEKT (112 aa)) are interaction with BRCA2. Lysine 561 is covalently cross-linked (Glycyl lysine isopeptide (Lys-Gly) (interchain with G-Cter in ubiquitin)). A phosphoserine mark is found at serine 592, serine 594, and serine 717. A disordered region spans residues 868–906 (IERKQKTDGSKTSSSDTLSEEKNSECDPTPSHRGQLNKE). Serine 1257 carries the phosphoserine modification. The disordered stretch occupies residues 1396–1451 (GEEIKSQNSQESTADESEDDMSSQASKSKATEDGEEDEVSAGEKEQDSDESYDDSD). Phosphoserine; by ATM occurs at positions 1401 and 1404. Residues serine 1412 and serine 1423 each carry the phosphoserine modification. Threonine 1426 carries the phosphothreonine modification. A compositionally biased stretch (acidic residues) spans 1428 to 1451 (DGEEDEVSAGEKEQDSDESYDDSD). Serine 1435 bears the Phosphoserine mark.

It belongs to the Fanconi anemia protein FANCD2 family. In terms of assembly, homodimer; cannot be ubiquitinated and does not bind DNA. Part of a FANCI-FANCD2 heterodimeric complex that binds and scans dsDNA for DNA damage. Interacts directly with FANCE and FANCI. Interacts with USP1 and MEN1. The ubiquitinated form specifically interacts with BRCA1 and BLM. Both the nonubiquitinated and the monoubiquitinated forms interact with BRCA2; this interaction is mediated by phosphorylated FANCG and the complex also includes XCCR3. The ubiquitinated form specifically interacts with MTMR15/FAN1 (via UBZ-type zinc finger), leading to recruit MTMR15/FAN1 to sites of DNA damage. Interacts with DCLRE1B/Apollo. Interacts with POLN. Interacts with UHRF1 and UHRF2; these interactions promote FANCD2 activation. In terms of processing, monoubiquitinated on Lys-561 during S phase and upon genotoxic stress by FANCL in complex with E2 ligases UBE2T or UBE2W (isoform 1 and isoform 2). Deubiquitinated by USP1 as cells enter G2/M, or once DNA repair is completed. Monoubiquitination requires the joint intervention of the FANC core complex, including FANCA, FANCB, FANCC, FANCE, FANCF, FANCG, and FANCM, and proteins involved in cell cycle checkpoints and DNA repair, including RPA1, ATR, CHEK1 and BRCA1, and is mediated by FANCL/PHF9. Monoubiquitination prevents DNA release from the FANCI-FANCD2 complex. FANCD2 is only ubiquitinated in the FANCI-FANCD2 complex and the monoubiquitination of FANCD2 is promoted by phosphorylation of FANCI. Ubiquitination is required for binding to chromatin, interaction with BRCA1, BRCA2 and MTMR15/FAN1, DNA repair, and normal cell cycle progression, but not for phosphorylation on Ser-222 or interaction with MEN1. Phosphorylated in response to various genotoxic stresses by ATM and/or ATR. Upon ionizing radiation, phosphorylated by ATM on Ser-222 and Ser-1404. Phosphorylation on Ser-222 is required for S-phase checkpoint activation, but not for ubiquitination, foci formation, or DNA repair. In contrast, phosphorylation by ATR on other sites may be required for ubiquitination and foci formation. Highly expressed in germinal center cells of the spleen, tonsil, and reactive lymph nodes, and in the proliferating basal layer of squamous epithelium of tonsil, esophagus, oropharynx, larynx and cervix. Expressed in cytotrophoblastic cells of the placenta and exocrine cells of the pancreas (at protein level). Highly expressed in testis, where expression is restricted to maturing spermatocytes.

It is found in the nucleus. Required for maintenance of chromosomal stability. Promotes accurate and efficient pairing of homologs during meiosis. Involved in the repair of DNA double-strand breaks, both by homologous recombination and single-strand annealing. The FANCI-FANCD2 complex binds and scans double-stranded DNA (dsDNA) for DNA damage; this complex stalls at DNA junctions between double-stranded DNA and single-stranded DNA. May participate in S phase and G2 phase checkpoint activation upon DNA damage. Plays a role in preventing breakage and loss of missegregating chromatin at the end of cell division, particularly after replication stress. Required for the targeting, or stabilization, of BLM to non-centromeric abnormal structures induced by replicative stress. Promotes BRCA2/FANCD1 loading onto damaged chromatin. May also be involved in B-cell immunoglobulin isotype switching. This chain is Fanconi anemia group D2 protein (FANCD2), found in Homo sapiens (Human).